A 369-amino-acid chain; its full sequence is Core-capsid bridging protein (369 aa).

Residues 15 to 50 (APEIYGPPKKEEQDYKPRKLKRVKKKKKDDDDDELD) are disordered. A compositionally biased stretch (basic and acidic residues) spans 22–31 (PKKEEQDYKP). The span at 32-41 (RKLKRVKKKK) shows a compositional bias: basic residues. Thr85 carries the phosphothreonine; by host modification. Ser166 carries the post-translational modification Phosphoserine; by host. The segment at 307–342 (PGYRGYTYRPRRRATTRRRTTTGTRRRRRRRQPVLA) is disordered. Residues 315 to 338 (RPRRRATTRRRTTTGTRRRRRRRQ) are compositionally biased toward basic residues.

This sequence belongs to the adenoviridae core-capsid bridging protein family. In terms of assembly, monomer. Homodimer. Exists in equilibrium between monomers and dimers in solution. Interacts with the histone-like nucleoprotein; this interactions bridge the virus core to the capsid. Interacts with core protein X; this interactions bridge the virus core to the capsid. Interacts with the endosome lysis protein VI; this interactions bridge the virus core to the capsid. Interacts with the peripentonal hexons. Interacts with host NPM1; this interaction might play a role in virus assembly.

Its subcellular location is the virion. It is found in the host nucleus. It localises to the host nucleolus. In terms of biological role, associates loosely with the viral DNA to form an outer shell around the nucleoprotein-DNA complex and links it with the capsid by binding the endosome lysis protein. Dissociates from the viral genome during entry. Might be involved in nuclear capsid assembly of the viral particles through its association with NPM1/nucleophosmin. The polypeptide is Core-capsid bridging protein (Homo sapiens (Human)).